The following is a 148-amino-acid chain: Cytochrome c6, chloroplastic (148 aa).

Residues 1–58 (MLQLANRSVRAKAARASQSARSVSCAAAKRGADVAPLTSALAVTASILLTTGAASASA) constitute a chloroplast transit peptide. Heme c is bound by residues Cys-72, Cys-75, His-76, and Met-118.

This sequence belongs to the cytochrome c family. PetJ subfamily. Thought to function as a monomer, however 2 crystal forms are observed; a homodimer and homotrimer, suggesting the protein oligomerizes. In terms of processing, binds 1 heme c group covalently per subunit.

The protein resides in the plastid. The protein localises to the chloroplast thylakoid lumen. Functionally, functions as an electron carrier between membrane-bound cytochrome b6-f and photosystem I in oxygenic photosynthesis. The chain is Cytochrome c6, chloroplastic (petJ) from Chlamydomonas reinhardtii (Chlamydomonas smithii).